The following is a 150-amino-acid chain: Heat shock protein beta-3 (150 aa).

A sHSP domain is found at 47 to 150 (KTRAAQSPPV…VEVKDPVGTK (104 aa)).

It belongs to the small heat shock protein (HSP20) family.

It is found in the cytoplasm. The protein resides in the nucleus. Its function is as follows. Inhibitor of actin polymerization. This Homo sapiens (Human) protein is Heat shock protein beta-3 (HSPB3).